The primary structure comprises 656 residues: RNA-binding protein EWS (656 aa).

Positions 1 to 285 (MASTDYSTYS…GVYGQESGGF (285 aa)) are EAD (Gln/Pro/Thr-rich). 31 tandem repeats follow at residues 8–16 (TYSQAAAQQ), 17–27 (GYSAYTAQPTQ), 28–34 (GYAQTTQ), 35–42 (AYGQQSYG), 43–50 (TYGQPTDV), 51–59 (SYTQAQTTA), 60–68 (TYGQTAYAT), 69–75 (SYGQPPT), 76–84 (GYTTPTAPQ), 85–91 (AYSQPVQ), 92–110 (GYGT…TTQA), 111–116 (SYAAQS), 117–125 (AYGTQPAYP), 126–156 (AYGQ…SSTG), 157–163 (GYNQPSL), 164–170 (GYGQSNY), 171–177 (SYPQVPG), 178–188 (SYPMQPVTAPP), 189–193 (SYPPT), 194–201 (SYSSTQPT), 202–206 (SYDQS), 207–212 (SYSQQN), 213–218 (TYGQPS), 219–224 (SYGQQS), 225–230 (SYGQQS), 231–238 (SYGQQPPT), 239–245 (SYPPQTG), 246–252 (SYSQAPS), 253–259 (QYSQQSS), 260–276 (SYGQ…SSMG), and 277–285 (VYGQESGGF). Residues 8-285 (TYSQAAAQQG…GVYGQESGGF (278 aa)) are 31 X approximate tandem repeats. Positions 123 to 137 (AYPAYGQQPAATAPT) are enriched in low complexity. A disordered region spans residues 123 to 360 (AYPAYGQQPA…PVDPDEDSDN (238 aa)). Residues 143 to 172 (NKPTETSQPQSSTGGYNQPSLGYGQSNYSY) are compositionally biased toward polar residues. The segment covering 192 to 266 (PTSYSSTQPT…QSSSYGQQSS (75 aa)) has biased composition (low complexity). The region spanning 256–285 (QQSSSYGQQSSFRQDHPSSMGVYGQESGGF) is the IQ domain. Ser266 carries the post-translational modification Phosphoserine; by PKC. Asymmetric dimethylarginine occurs at positions 300, 302, 304, 309, 314, 317, and 321. The span at 308 to 335 (DRGGMSRGGRGGGRGGMGSAGERGGFNK) shows a compositional bias: gly residues. A compositionally biased stretch (low complexity) spans 336–350 (PGGPMDEGPDLDLGP). The 87-residue stretch at 361 to 447 (SAIYVQGLND…SKLKVSLARK (87 aa)) folds into the RRM domain. At Lys439 the chain carries N6-acetyllysine. 2 disordered regions span residues 448–525 (KPPM…WQCP) and 547–656 (KPEG…DRPY). Asymmetric dimethylarginine is present on residues Arg455 and Arg464. Arg471 is modified (asymmetric dimethylarginine; alternate). Position 471 is an omega-N-methylarginine; alternate (Arg471). Over residues 472–490 (GGPGGPGGPGGPMGRMGGR) the composition is skewed to gly residues. Arg486 carries the omega-N-methylarginine modification. An Asymmetric dimethylarginine; by PRMT8 modification is found at Arg490. 3 positions are modified to asymmetric dimethylarginine: Arg494, Arg500, and Arg503. Arg506 bears the Asymmetric dimethylarginine; alternate mark. Residue Arg506 is modified to Omega-N-methylarginine; alternate. The segment at 518–549 (RAGDWQCPNPGCGNQNFAWRTECNQCKAPKPE) adopts a RanBP2-type zinc-finger fold. Residues 551-560 (FLPPPFPPPG) are compositionally biased toward pro residues. Residues Arg563 and Arg565 each carry the asymmetric dimethylarginine modification. Residues 566 to 591 (GGPGGMRGGRGGLMDRGGPGGMFRGG) are compositionally biased toward gly residues. At Arg572 the chain carries Asymmetric dimethylarginine; alternate; by PRMT8. Arg572 carries the omega-N-methylarginine; alternate; by PRMT8 modification. Residues Arg575, Arg581, Arg589, and Arg592 each carry the asymmetric dimethylarginine modification. The segment covering 592 to 606 (RGGDRGGFRGGRGMD) has biased composition (basic and acidic residues). Arg596 is modified (asymmetric dimethylarginine; alternate; by PRMT8). Arg596 bears the Omega-N-methylarginine; alternate; by PRMT8 mark. Arg600 carries the post-translational modification Asymmetric dimethylarginine. Arg603 is modified (asymmetric dimethylarginine; by PRMT8). At Arg607 the chain carries Asymmetric dimethylarginine; alternate; by PRMT8. Position 607 is an omega-N-methylarginine; alternate; by PRMT8 (Arg607). Gly residues predominate over residues 607–618 (RGGFGGGRRGGP). The residue at position 615 (Arg615) is an Asymmetric dimethylarginine; alternate. An Omega-N-methylarginine; alternate modification is found at Arg615. Residues Arg633 and Arg636 each carry the asymmetric dimethylarginine modification. The Nuclear localization signal motif lies at 639 to 656 (PGKMDKGEHRQERRDRPY). Over residues 641-656 (KMDKGEHRQERRDRPY) the composition is skewed to basic and acidic residues.

The protein belongs to the RRM TET family. As to quaternary structure, binds POLR2C, SF1, calmodulin and RNA. Interacts with PTK2B/FAK2 and TDRD3. Binds calmodulin in the presence, but not in the absence, of calcium ion. Forms a complex with REC8, PRDM9, SYCP3 and SYCP1; complex formation is dependent of phosphorylated form of REC8 and requires PRDM9 bound to hotspot DNA; EWSR1 joins PRDM9 with the chromosomal axis through REC8. Post-translationally, phosphorylated; calmodulin-binding inhibits phosphorylation of Ser-266. Highly methylated on arginine residues. Methylation is mediated by PRMT1 and, at lower level by PRMT8. Ubiquitous.

It is found in the nucleus. The protein resides in the cytoplasm. The protein localises to the cell membrane. Functionally, binds to ssRNA containing the consensus sequence 5'-AGGUAA-3'. Might normally function as a transcriptional repressor. EWS-fusion-proteins (EFPS) may play a role in the tumorigenic process. They may disturb gene expression by mimicking, or interfering with the normal function of CTD-POLII within the transcription initiation complex. They may also contribute to an aberrant activation of the fusion protein target genes. This chain is RNA-binding protein EWS (EWSR1), found in Homo sapiens (Human).